The primary structure comprises 151 residues: Small ribosomal subunit protein bS6 (151 aa).

The tract at residues 97–151 (EAEPSAMMQKRDRDDRKDRDRGDRPRRRDDDFGGGDRGDRGDRGDRPERNFGGEN) is disordered. Basic and acidic residues predominate over residues 105–151 (QKRDRDDRKDRDRGDRPRRRDDDFGGGDRGDRGDRGDRPERNFGGEN).

The protein belongs to the bacterial ribosomal protein bS6 family.

Binds together with bS18 to 16S ribosomal RNA. The sequence is that of Small ribosomal subunit protein bS6 from Methylorubrum extorquens (strain CM4 / NCIMB 13688) (Methylobacterium extorquens).